The primary structure comprises 245 residues: 1-(5-phosphoribosyl)-5-[(5-phosphoribosylamino)methylideneamino] imidazole-4-carboxamide isomerase (245 aa).

Catalysis depends on Asp-7, which acts as the Proton acceptor. Asp-129 functions as the Proton donor in the catalytic mechanism.

It belongs to the HisA/HisF family.

Its subcellular location is the cytoplasm. It catalyses the reaction 1-(5-phospho-beta-D-ribosyl)-5-[(5-phospho-beta-D-ribosylamino)methylideneamino]imidazole-4-carboxamide = 5-[(5-phospho-1-deoxy-D-ribulos-1-ylimino)methylamino]-1-(5-phospho-beta-D-ribosyl)imidazole-4-carboxamide. Its pathway is amino-acid biosynthesis; L-histidine biosynthesis; L-histidine from 5-phospho-alpha-D-ribose 1-diphosphate: step 4/9. This chain is 1-(5-phosphoribosyl)-5-[(5-phosphoribosylamino)methylideneamino] imidazole-4-carboxamide isomerase, found in Proteus mirabilis (strain HI4320).